Here is a 1056-residue protein sequence, read N- to C-terminus: Isoleucine--tRNA ligase (1056 aa).

Over residues 1 to 13 (MCDQGEVSSQNSS) the composition is skewed to polar residues. A disordered region spans residues 1–26 (MCDQGEVSSQNSSDYKEQRPTPRPNL). A 'HIGH' region motif is present at residues 63–73 (PFANGLPHFGH). The short motif at 632–636 (KASKS) is the 'KMSKS' region element. An ATP-binding site is contributed by lysine 635.

It belongs to the class-I aminoacyl-tRNA synthetase family. IleS type 2 subfamily. As to quaternary structure, monomer. The cofactor is Zn(2+).

Its subcellular location is the cytoplasm. The catalysed reaction is tRNA(Ile) + L-isoleucine + ATP = L-isoleucyl-tRNA(Ile) + AMP + diphosphate. In terms of biological role, catalyzes the attachment of isoleucine to tRNA(Ile). As IleRS can inadvertently accommodate and process structurally similar amino acids such as valine, to avoid such errors it has two additional distinct tRNA(Ile)-dependent editing activities. One activity is designated as 'pretransfer' editing and involves the hydrolysis of activated Val-AMP. The other activity is designated 'posttransfer' editing and involves deacylation of mischarged Val-tRNA(Ile). This Tropheryma whipplei (strain TW08/27) (Whipple's bacillus) protein is Isoleucine--tRNA ligase.